The sequence spans 104 residues: NADH-quinone oxidoreductase subunit K (104 aa).

Helical transmembrane passes span 4-24, 31-51, and 67-87; these read VPAS…LFGA, VIVL…LVAF, and LFTM…LIAL.

The protein belongs to the complex I subunit 4L family. As to quaternary structure, NDH-1 is composed of 14 different subunits. Subunits NuoA, H, J, K, L, M, N constitute the membrane sector of the complex.

Its subcellular location is the cell membrane. The enzyme catalyses a quinone + NADH + 5 H(+)(in) = a quinol + NAD(+) + 4 H(+)(out). NDH-1 shuttles electrons from NADH, via FMN and iron-sulfur (Fe-S) centers, to quinones in the respiratory chain. The immediate electron acceptor for the enzyme in this species is believed to be a menaquinone. Couples the redox reaction to proton translocation (for every two electrons transferred, four hydrogen ions are translocated across the cytoplasmic membrane), and thus conserves the redox energy in a proton gradient. The sequence is that of NADH-quinone oxidoreductase subunit K from Bacillus cereus (strain Q1).